We begin with the raw amino-acid sequence, 109 residues long: Protein TAR1 (109 aa).

Residues H62 to I109 are disordered.

Its subcellular location is the mitochondrion. May be involved in mtDNA stability or mitochondrial gene expression regulation at the post-transcriptional level. In Kluyveromyces lactis (strain ATCC 8585 / CBS 2359 / DSM 70799 / NBRC 1267 / NRRL Y-1140 / WM37) (Yeast), this protein is Protein TAR1 (TAR1-A).